The chain runs to 160 residues: Succinate dehydrogenase assembly factor 2-A, mitochondrial (160 aa).

The transit peptide at 1–30 (MLRQLKLTLNISRWIFMPWQRQASASSSQV) directs the protein to the mitochondrion.

The protein belongs to the SDHAF2 family. In terms of assembly, interacts with the flavoprotein subunit within the SDH catalytic dimer.

The protein localises to the mitochondrion matrix. In terms of biological role, plays an essential role in the assembly of succinate dehydrogenase (SDH), an enzyme complex (also referred to as respiratory complex II) that is a component of both the tricarboxylic acid (TCA) cycle and the mitochondrial electron transport chain, and which couples the oxidation of succinate to fumarate with the reduction of ubiquinone (coenzyme Q) to ubiquinol. Required for flavinylation (covalent attachment of FAD) of the flavoprotein subunit of the SDH catalytic dimer. The polypeptide is Succinate dehydrogenase assembly factor 2-A, mitochondrial (Drosophila persimilis (Fruit fly)).